We begin with the raw amino-acid sequence, 133 residues long: uncharacterized protein (133 aa).

Residues M1 to G22 form the signal peptide. An N-linked (GlcNAc...) asparagine glycan is attached at N111.

Its subcellular location is the secreted. This is an uncharacterized protein from Saccharomyces cerevisiae (strain ATCC 204508 / S288c) (Baker's yeast).